A 238-amino-acid chain; its full sequence is Orotidine 5'-phosphate decarboxylase (238 aa).

Residues aspartate 10, lysine 32, 59 to 68 (DLKLHDIPNT), threonine 122, arginine 184, glutamine 193, glycine 213, and arginine 214 contribute to the substrate site. Catalysis depends on lysine 61, which acts as the Proton donor.

The protein belongs to the OMP decarboxylase family. Type 1 subfamily. In terms of assembly, homodimer.

The catalysed reaction is orotidine 5'-phosphate + H(+) = UMP + CO2. It participates in pyrimidine metabolism; UMP biosynthesis via de novo pathway; UMP from orotate: step 2/2. Its function is as follows. Catalyzes the decarboxylation of orotidine 5'-monophosphate (OMP) to uridine 5'-monophosphate (UMP). The protein is Orotidine 5'-phosphate decarboxylase of Bacillus cereus (strain G9842).